Consider the following 1025-residue polypeptide: Dihydropyrimidine dehydrogenase [NADP(+)] (1025 aa).

Positions 69-100 (ERGALREAVRCLKCADAPCQKSCPTSLDIKSF) constitute a 4Fe-4S ferredoxin-type 1 domain. Residues Cys-79, Cys-82, Cys-87, and Cys-91 each coordinate [4Fe-4S] cluster. FAD is bound at residue Val-129. [4Fe-4S] cluster-binding residues include Cys-130, Cys-136, Cys-140, and Gln-156. FAD is bound by residues 194-198 (GAGPA), 218-226 (EKQEYVGGL), and Arg-235. NADP(+)-binding positions include 340–343 (AGDT), 364–365 (RK), and Arg-371. N6-acetyllysine is present on Lys-384. NADP(+) is bound by residues 437–439 (PFG) and 481–487 (DVVGMAN). 480-489 (GDVVGMANTT) is a binding site for FAD. FMN is bound by residues Ser-550 and 574-575 (KT). Substrate contacts are provided by residues Asn-609 and 668–670 (NLS). The Proton acceptor role is filled by Cys-671. Lys-709 contacts FMN. Substrate is bound at residue 736–737 (NT). FMN-binding positions include Gly-767, 793–795 (TGG), and 816–817 (CS). The residue at position 905 (Ser-905) is a Phosphoserine. 4Fe-4S ferredoxin-type domains are found at residues 944 to 976 (VVAL…FDPE) and 978 to 1007 (HLPT…MVSR). [4Fe-4S] cluster is bound by residues Cys-953, Cys-956, Cys-959, Cys-963, Cys-986, Cys-989, Cys-992, and Cys-996.

Belongs to the dihydropyrimidine dehydrogenase family. As to quaternary structure, homodimer. FAD is required as a cofactor. It depends on FMN as a cofactor. Requires [4Fe-4S] cluster as cofactor.

The protein localises to the cytoplasm. It catalyses the reaction 5,6-dihydrouracil + NADP(+) = uracil + NADPH + H(+). The enzyme catalyses 5,6-dihydrothymine + NADP(+) = thymine + NADPH + H(+). The protein operates within amino-acid biosynthesis; beta-alanine biosynthesis. Its activity is regulated as follows. Inactivated by 5-iodouracil. In terms of biological role, involved in pyrimidine base degradation. Catalyzes the reduction of uracil and thymine. Also involved the degradation of the chemotherapeutic drug 5-fluorouracil. The chain is Dihydropyrimidine dehydrogenase [NADP(+)] from Rattus norvegicus (Rat).